Here is a 512-residue protein sequence, read N- to C-terminus: PTS system mannitol-specific EIICB component (512 aa).

The Cytoplasmic segment spans residues 1-28; that stretch reads MSQTEEKKGIGRRVQAFGSFLSSMIMPN. A PTS EIIC type-2 domain is found at 17 to 349; sequence FGSFLSSMIM…MKFTKEPKQD (333 aa). A helical transmembrane segment spans residues 29–50; it reads IGAFIAWGFIAAIFIDNGWFPN. Residues 51–54 are Extracellular-facing; sequence KDLA. Residues 55-75 traverse the membrane as a helical segment; sequence TLAGPMITYLIPLLIAFSGGR. Topologically, residues 76 to 139 are cytoplasmic; that stretch reads LIYDLRGGII…QGFEMLFNNF (64 aa). A helical transmembrane segment spans residues 140–161; it reads SAGILGFIMTIAGFKILAPLMK. The Extracellular segment spans residues 162–170; sequence FIMHILSVA. A helical transmembrane segment spans residues 171-191; it reads VEALVHAHLLPLVSILVEPAK. The Cytoplasmic segment spans residues 192–278; the sequence is IVFLNNAINH…VLMRPLLFIA (87 aa). The helical transmembrane segment at 279–298 threads the bilayer; sequence VILGGMTGVATYQATGFGFK. Residues 299 to 318 lie on the Extracellular side of the membrane; sequence SPASPGSFIVYCLNAPRGEF. The helical transmembrane segment at 319–340 threads the bilayer; sequence LHMLLGVFLATLVSFVVAALIM. Over 341–512 the chain is Cytoplasmic; it reads KFTKEPKQDL…LNNLKKDDQA (172 aa). Residues 365–376 show a composition bias toward low complexity; sequence SSVASKLVSSDK. Residues 365 to 401 form a disordered region; the sequence is SSVASKLVSSDKNVNTEENASGNVSETSSLDDDPEAL. Residues 380–392 show a composition bias toward polar residues; that stretch reads TEENASGNVSETS. Positions 419–512 constitute a PTS EIIB type-2 domain; that stretch reads NHVIFACDAG…LNNLKKDDQA (94 aa). The Phosphocysteine intermediate; for EIIB activity role is filled by Cys425. Cys425 bears the Phosphocysteine; by EIIA mark.

Homodimer.

The protein localises to the cell membrane. The enzyme catalyses D-mannitol(out) + N(pros)-phospho-L-histidyl-[protein] = D-mannitol 1-phosphate(in) + L-histidyl-[protein]. The phosphoenolpyruvate-dependent sugar phosphotransferase system (sugar PTS), a major carbohydrate active transport system, catalyzes the phosphorylation of incoming sugar substrates concomitantly with their translocation across the cell membrane. The enzyme II CmtAB PTS system is involved in D-mannitol transport. This Staphylococcus aureus (strain MRSA252) protein is PTS system mannitol-specific EIICB component (mtlA).